A 300-amino-acid chain; its full sequence is Fatty acid elongase 3 (300 aa).

Helical transmembrane passes span 31-51 (VPAV…ENVM), 61-81 (FLNM…AYYC), and 127-147 (IFFD…KIPE). The HxxHH motif signature appears at 165-169 (HWYHH). Catalysis depends on histidine 168, which acts as the Nucleophile. The next 4 membrane-spanning stretches (helical) occupy residues 170-190 (ATVM…GLWF), 192-212 (TMNY…ACGM), 219-239 (IAPL…LIVL), and 261-283 (MGLL…SYIS).

Belongs to the ELO family.

It localises to the endoplasmic reticulum membrane. It catalyses the reaction an acyl-CoA + malonyl-CoA + H(+) = a 3-oxoacyl-CoA + CO2 + CoA. The protein operates within lipid metabolism; fatty acid biosynthesis. In terms of biological role, involved in the synthesis of fatty acids. Elongates C14 fatty acids to C18. Required for the maintenance of the global lipidome profile in this parasite. The polypeptide is Fatty acid elongase 3 (Trypanosoma cruzi (strain CL Brener)).